Here is a 362-residue protein sequence, read N- to C-terminus: Very-long-chain (3R)-3-hydroxyacyl-CoA dehydratase 3 (362 aa).

An N-acetylmethionine modification is found at M1. Residues 1 to 149 lie on the Cytoplasmic side of the membrane; sequence METQVLTPHV…ETLTNLKKGY (149 aa). Residues 5–94 form the CS domain; sequence VLTPHVYWAQ…KGSHWWERLT (90 aa). The residue at position 7 (T7) is a Phosphothreonine. A coiled-coil region spans residues 111–138; sequence LDESDAEMELRAKEEERLNKLRLEREGS. S114 carries the post-translational modification Phosphoserine. The helical transmembrane segment at 150-170 threads the bilayer; sequence LFMYNLVQLLGFSWIFVNLTV. The Lumenal portion of the chain corresponds to 171–189; it reads RFFILGKESFYDTFHNVAD. The chain crosses the membrane as a helical span at residues 190–210; it reads MMYFCQMLALVETLNAAIGVT. The Cytoplasmic portion of the chain corresponds to 211 to 212; sequence ST. Residues 213–233 form a helical membrane-spanning segment; that stretch reads PVLPALIQFLGRNFILFLVFG. The Lumenal portion of the chain corresponds to 234-242; that stretch reads TMEEMQNKA. The helical transmembrane segment at 243-263 threads the bilayer; that stretch reads VVFFVFYSWSAIEIFRYPFYM. Residues 264 to 280 are Cytoplasmic-facing; the sequence is LSCIDMDWKVLTWLRYT. The chain crosses the membrane as a helical span at residues 281-301; the sequence is MWIPLYPLGCLSEAVAVIQSI. Catalysis depends on residues Y286 and E293. Topologically, residues 302-322 are lumenal; sequence PVFNESGRFSFTLPYPVKMKV. A helical transmembrane segment spans residues 323-343; it reads RFSFFLQVYLVMLFLGLYINF. Topologically, residues 344–362 are cytoplasmic; the sequence is RHLYKQRRRRYGQKKKKLH.

Belongs to the very long-chain fatty acids dehydratase HACD family. As to quaternary structure, may interact with enzymes of the ELO family (including ELOVL1); with those enzymes that mediate condensation, the first of the four steps of the reaction cycle responsible for fatty acids elongation, may be part of a larger fatty acids elongase complex. Interacts with RAC1. Associates with internalized insulin receptor/INSR complexes on Golgi/endosomal membranes; HACD3/PTPLAD1 together with ATIC and PRKAA2/AMPK2 is proposed to be part of a signaling network regulating INSR autophosphorylation and endocytosis.

Its subcellular location is the endoplasmic reticulum membrane. It carries out the reaction a very-long-chain (3R)-3-hydroxyacyl-CoA = a very-long-chain (2E)-enoyl-CoA + H2O. The enzyme catalyses (3R)-hydroxyhexadecanoyl-CoA = (2E)-hexadecenoyl-CoA + H2O. The protein operates within lipid metabolism; fatty acid biosynthesis. Functionally, catalyzes the third of the four reactions of the long-chain fatty acids elongation cycle. This endoplasmic reticulum-bound enzymatic process, allows the addition of two carbons to the chain of long- and very long-chain fatty acids/VLCFAs per cycle. This enzyme catalyzes the dehydration of the 3-hydroxyacyl-CoA intermediate into trans-2,3-enoyl-CoA, within each cycle of fatty acid elongation. Thereby, it participates in the production of VLCFAs of different chain lengths that are involved in multiple biological processes as precursors of membrane lipids and lipid mediators. Involved in Rac1-signaling pathways leading to the modulation of gene expression. Promotes insulin receptor/INSR autophosphorylation and is involved in INSR internalization. In Mus musculus (Mouse), this protein is Very-long-chain (3R)-3-hydroxyacyl-CoA dehydratase 3.